Here is a 306-residue protein sequence, read N- to C-terminus: D-alanine--D-alanine ligase B (306 aa).

Residues E15 and S150 contribute to the active site. Residues K101 to E303 form the ATP-grasp domain. I134 to T189 lines the ATP pocket. Residues D257, E270, and N272 each coordinate Mg(2+). S281 is a catalytic residue.

Belongs to the D-alanine--D-alanine ligase family. In terms of assembly, monomer. Mg(2+) is required as a cofactor. It depends on Mn(2+) as a cofactor.

The protein localises to the cytoplasm. The enzyme catalyses 2 D-alanine + ATP = D-alanyl-D-alanine + ADP + phosphate + H(+). Its pathway is cell wall biogenesis; peptidoglycan biosynthesis. Its function is as follows. Cell wall formation. The protein is D-alanine--D-alanine ligase B (ddlB) of Escherichia coli (strain K12).